Reading from the N-terminus, the 545-residue chain is T-complex protein 1 subunit gamma (545 aa).

Met-1 bears the N-acetylmethionine mark. The tract at residues Met-1–Ser-24 is disordered. Ser-11 is subject to Phosphoserine. Residue Lys-15 forms a Glycyl lysine isopeptide (Lys-Gly) (interchain with G-Cter in SUMO2) linkage. Residue Gly-42 coordinates ADP. Gly-42 contributes to the ATP binding site. Asp-93 is a Mg(2+) binding site. ADP contacts are provided by Gly-94, Thr-95, Thr-96, Ser-97, Thr-162, and Lys-163. ATP contacts are provided by Gly-94, Thr-95, and Thr-96. Ser-170 bears the Phosphoserine mark. Lys-222 carries the post-translational modification N6-acetyllysine. Residues Ser-243 and Ser-244 each carry the phosphoserine modification. Tyr-247 is modified (phosphotyrosine). Residues Lys-248 and Lys-249 each participate in a glycyl lysine isopeptide (Lys-Gly) (interchain with G-Cter in SUMO2) cross-link. Ser-252 is subject to Phosphoserine. The cysteines at positions 366 and 372 are disulfide-linked. Lys-381 participates in a covalent cross-link: Glycyl lysine isopeptide (Lys-Gly) (interchain with G-Cter in SUMO2). Gly-411 provides a ligand contact to ADP. Gly-411 lines the ATP pocket. Phosphothreonine occurs at positions 430 and 459. Residues Gly-482, Glu-483, Glu-497, and Lys-502 each coordinate ADP. An ATP-binding site is contributed by Gly-482. Residue Glu-497 coordinates ATP. The interval His-526–Glu-545 is disordered.

This sequence belongs to the TCP-1 chaperonin family. As to quaternary structure, component of the chaperonin-containing T-complex (TRiC), a hexadecamer composed of two identical back-to-back stacked rings enclosing a protein folding chamber. Each ring is made up of eight different subunits: TCP1/CCT1, CCT2, CCT3, CCT4, CCT5, CCT6A/CCT6, CCT7, CCT8. Interacts with PACRG. Interacts with DNAAF4. Interacts with DLEC1.

It is found in the cytoplasm. The catalysed reaction is ATP + H2O = ADP + phosphate + H(+). Its function is as follows. Component of the chaperonin-containing T-complex (TRiC), a molecular chaperone complex that assists the folding of actin, tubulin and other proteins upon ATP hydrolysis. The TRiC complex mediates the folding of WRAP53/TCAB1, thereby regulating telomere maintenance. As part of the TRiC complex may play a role in the assembly of BBSome, a complex involved in ciliogenesis regulating transports vesicles to the cilia. In Homo sapiens (Human), this protein is T-complex protein 1 subunit gamma (CCT3).